Reading from the N-terminus, the 227-residue chain is Transcriptional regulatory protein TdiR (227 aa).

The Response regulatory domain occupies 11-125 (TVFVVDDEAS…DLLDAVNAAL (115 aa)). Asp-60 is subject to 4-aspartylphosphate. Residues 141–206 (HLDLLATLSQ…DLMHFVMRGS (66 aa)) form the HTH luxR-type domain. Positions 165–184 (SKEIAKLLGISYKTVEAHRG) form a DNA-binding region, H-T-H motif.

Phosphorylated by TdiS.

Its function is as follows. Member of the two-component regulatory system TdiR/TdiS, which probably regulates transcription of toluene catabolic genes (bss operon). Binds to DNA. The polypeptide is Transcriptional regulatory protein TdiR (tdiR) (Thauera aromatica).